A 115-amino-acid chain; its full sequence is Phosphoribosyl-AMP cyclohydrolase (115 aa).

Residue aspartate 80 participates in Mg(2+) binding. Cysteine 81 provides a ligand contact to Zn(2+). Mg(2+) is bound by residues aspartate 82 and aspartate 84. The Zn(2+) site is built by cysteine 97 and cysteine 104.

The protein belongs to the PRA-CH family. Homodimer. The cofactor is Mg(2+). Zn(2+) is required as a cofactor.

It localises to the cytoplasm. It carries out the reaction 1-(5-phospho-beta-D-ribosyl)-5'-AMP + H2O = 1-(5-phospho-beta-D-ribosyl)-5-[(5-phospho-beta-D-ribosylamino)methylideneamino]imidazole-4-carboxamide. Its pathway is amino-acid biosynthesis; L-histidine biosynthesis; L-histidine from 5-phospho-alpha-D-ribose 1-diphosphate: step 3/9. Catalyzes the hydrolysis of the adenine ring of phosphoribosyl-AMP. This is Phosphoribosyl-AMP cyclohydrolase from Mycobacterium leprae (strain Br4923).